A 171-amino-acid polypeptide reads, in one-letter code: MYHVVCATTNPAKIQAILRAFSEIFGEASCHIDAVSVDSGVPEQPLGSEETRTGARQRVINARALRPQADYWVAIEAGIDDDSTFSWVVIESADQRGEARSATLPLPAAILNEVRAGKALGPVMSAWTGIDEIGRKEGAIGIFTAGKLTRSSVYHQAVILALSPFHNAIYR.

A substrate-binding site is contributed by 8–13; that stretch reads TTNPAK. Residues Asp38 and Gln68 each coordinate Mg(2+).

It belongs to the YjjX NTPase family. Homodimer. Mg(2+) is required as a cofactor. It depends on Mn(2+) as a cofactor.

It carries out the reaction XTP + H2O = XDP + phosphate + H(+). The catalysed reaction is ITP + H2O = IDP + phosphate + H(+). In terms of biological role, phosphatase that hydrolyzes non-canonical purine nucleotides such as XTP and ITP to their respective diphosphate derivatives. Probably excludes non-canonical purines from DNA/RNA precursor pool, thus preventing their incorporation into DNA/RNA and avoiding chromosomal lesions. The chain is Inosine/xanthosine triphosphatase from Cronobacter sakazakii (strain ATCC BAA-894) (Enterobacter sakazakii).